We begin with the raw amino-acid sequence, 570 residues long: NADPH oxidase 2 (570 aa).

The Cytoplasmic segment spans residues 2 to 9 (GNWVVNEG). Residues 10–36 (ISIFVILVWLGMNVFLFVWYYRVYDIP) traverse the membrane as a helical segment. The Extracellular segment spans residues 37–46 (DKFFYTRKLL). The helical transmembrane segment at 47-72 (GSALALARAPAACLNFNCMLILLPVC) threads the bilayer. The Ferric oxidoreductase domain occupies 54 to 286 (RAPAACLNFN…MFLYLCERLV (233 aa)). Over 73 to 95 (RNLLSFLRGSSACCSTRIRRQLD) the chain is Cytoplasmic. The chain crosses the membrane as a helical span at residues 96–130 (RNLTFHKMVAWMIALHTAIHTIAHLFNVEWCVNAR). Heme b contacts are provided by H101 and H115. The Extracellular portion of the chain corresponds to 131 to 163 (VNNSDPYSIALSDIGDKPNETYLNFVRQRIKNP). 2 N-linked (GlcNAc...) asparagine glycosylation sites follow: N132 and N149. A Glycyl lysine isopeptide (Lys-Gly) (interchain with G-Cter in ubiquitin) cross-link involves residue K161. A helical transmembrane segment spans residues 164-194 (EGGLYVAVTRLAGITGVVITLCLILIITSST). Residues 195 to 203 (KTIRRSYFE) are Cytoplasmic-facing. Residues R199 and S200 each coordinate FAD. Residues 204-222 (VFWYTHHLFVIFFIGLAIH) form a helical membrane-spanning segment. Positions 206, 209, 222, 226, and 227 each coordinate heme b. At 223-267 (GAQRIVRGQTAESLLKHQPRNCYQNISQWGKIENCPIPEFSGNPP) the chain is on the extracellular side. N247 is a glycosylation site (N-linked (GlcNAc...) asparagine). Heme b-binding residues include M268, Y280, and R287. A helical transmembrane segment spans residues 268–285 (MTWKWIVGPMFLYLCERL). Topologically, residues 286-570 (VRFWRSQQKV…VHFIFNKENF (285 aa)) are cytoplasmic. The region spanning 287-397 (RFWRSQQKVV…DGPFGTASED (111 aa)) is the FAD-binding FR-type domain. Glycyl lysine isopeptide (Lys-Gly) (interchain with G-Cter in ubiquitin) cross-links involve residues K294, K299, K306, K328, and K334. FAD contacts are provided by W337, H338, P339, T341, H354, R356, W361, and T362. K381 participates in a covalent cross-link: Glycyl lysine isopeptide (Lys-Gly) (interchain with G-Cter in ubiquitin). 3 residues coordinate NADPH: I411, R446, and T481. Residue K506 forms a Glycyl lysine isopeptide (Lys-Gly) (interchain with G-Cter in ubiquitin) linkage. R513 provides a ligand contact to NADPH. K567 participates in a covalent cross-link: Glycyl lysine isopeptide (Lys-Gly) (interchain with G-Cter in ubiquitin).

As to quaternary structure, component of the phagocyte NADPH oxidase core complex/cytochrome b558 complex, composed of CYBB (heavy chain (beta)) and CYBA (light chain (alpha)). Component of the phagocyte NADPH oxidase complex composed of an obligatory core heterodimer formed by the membrane proteins CYBA and CYBB and the cytosolic regulatory subunits NCF1/p47-phox, NCF2/p67-phox, NCF4/p40-phox and the small GTPase RAC1 or RAC2. Interacts with NCF1 (phosphorylated form). Interacts with NCF2; the interaction is enhanced in the presence of GBP7. Interacts with RAC2. Interacts with RAC1. Interacts with calprotectin (S100A8/9). Interacts with NRROS; the interaction is direct and impairs formation of a stable NADPH oxidase complex. Interacts with CYBC1; CYBC1 may act as a chaperone stabilizing Cytochrome b-245 heterodimer. The CYBA-CYBB complex interacts with GBP7. FAD serves as cofactor. Post-translationally, glycosylated. In terms of processing, phosphorylated on Ser and Thr residues by PKC during neutrophils activation. Phosphorylation enhances the NADPH oxidase activity and stimulates its interaction with RAC2, NCF2/p67-phox, and NCF1/p47-phox. Undergoes 'Lys-48'-linked polyubiquitination, likely by RNF145, triggering endoplasmic reticulum-associated degradation.

The protein resides in the cell membrane. It catalyses the reaction NADPH + 2 O2 = 2 superoxide + NADP(+) + H(+). Catalytic subunit of the phagocyte NADPH oxidase complex that mediates the transfer of electrons from cytosolic NADPH to O2 to produce the superoxide anion (O2(-)). In the activated complex, electrons are first transferred from NADPH to flavin adenine dinucleotide (FAD) and subsequently transferred via two heme molecules to molecular oxygen, producing superoxide through an outer-sphere reaction. Activation of the NADPH oxidase complex is initiated by the assembly of cytosolic subunits of the NADPH oxidase complex with the core NADPH oxidase complex to form a complex at the plasma membrane or phagosomal membrane. This activation process is initiated by phosphorylation dependent binding of the cytosolic NCF1/p47-phox subunit to the C-terminus of CYBA/p22-phox. NADPH oxidase complex assembly is impaired through interaction with NRROS. This chain is NADPH oxidase 2, found in Bos taurus (Bovine).